Reading from the N-terminus, the 176-residue chain is V-type proton ATPase 16 kDa proteolipid subunit (176 aa).

At 1-17 (MSVLLRSVTELCPVYSP) the chain is on the lumenal side. The chain crosses the membrane as a helical span at residues 18–38 (FFGSMGITASIVFTVFGGAYG). The Cytoplasmic portion of the chain corresponds to 39-62 (TAKSSVGISSVGVMKPEFIMRSLF). The helical transmembrane segment at 63-83 (PVVFAGVIGLYGLIVCIVLFI) threads the bilayer. The Lumenal segment spans residues 84–98 (NVNKSEYSLNRAFLD). A helical membrane pass occupies residues 99–119 (LGAGLTCGLCGLASGMSIGIS). Over 120–136 (GDCGVRGAAQQPKLFVS) the chain is Cytoplasmic. A helical transmembrane segment spans residues 137-157 (MLICLIFSEALALYGFIVALI). At 158-176 (MAATGDNSCVATASTSSSS) the chain is on the lumenal side.

It belongs to the V-ATPase proteolipid subunit family. In terms of assembly, V-ATPase is a heteromultimeric enzyme composed of a peripheral catalytic V1 complex (main components: subunits A, B, C, D, E, and F) attached to an integral membrane V0 proton pore complex (main component: the proteolipid protein; which is present as a hexamer that forms the proton-conducting pore).

The protein resides in the vacuole membrane. Functionally, proton-conducting pore forming subunit of the membrane integral V0 complex of vacuolar ATPase. V-ATPase is responsible for acidifying a variety of intracellular compartments in eukaryotic cells. This chain is V-type proton ATPase 16 kDa proteolipid subunit (VMA3), found in Entamoeba dispar.